Consider the following 367-residue polypeptide: tRNA(Ile)-lysidine synthase, chloroplastic (367 aa).

ATP is bound at residue 64-69 (SGGQDS).

It belongs to the tRNA(Ile)-lysidine synthase family.

The protein resides in the plastid. It localises to the chloroplast. The catalysed reaction is cytidine(34) in tRNA(Ile2) + L-lysine + ATP = lysidine(34) in tRNA(Ile2) + AMP + diphosphate + H(+). In terms of biological role, ligates lysine onto the cytidine present at position 34 of the AUA codon-specific tRNA(Ile) that contains the anticodon CAU, in an ATP-dependent manner. Cytidine is converted to lysidine, thus changing the amino acid specificity of the tRNA from methionine to isoleucine. In Nephroselmis olivacea (Green alga), this protein is tRNA(Ile)-lysidine synthase, chloroplastic.